The primary structure comprises 432 residues: Killer cell immunoglobulin-like receptor 3DL1 (432 aa).

A signal peptide spans 1–21 (MLLWFLSLVCSGFFLVQRMSA). Topologically, residues 22–335 (HVGSHDKPFL…ADTKTNNYKN (314 aa)) are extracellular. Ig-like C2-type domains follow at residues 42–100 (GQNV…HPQY), 135–202 (GGNV…NSYY), and 238–301 (GETM…FRNA). N-linked (GlcNAc...) asparagine glycosylation is present at N44. The cysteines at positions 49 and 95 are disulfide-linked. A glycan (N-linked (GlcNAc...) asparagine) is linked at N137. Disulfide bonds link C142/C195 and C245/C294. N300 carries N-linked (GlcNAc...) asparagine glycosylation. Residues 336-356 (LHILTGLLVTMVLVVIIIFYS) traverse the membrane as a helical segment. Residues 357-432 (CYFSKQNKSQ…DTIVYMEIMK (76 aa)) are Cytoplasmic-facing.

The protein belongs to the immunoglobulin superfamily.

Its subcellular location is the cell membrane. In terms of biological role, receptor on natural killer (NK) cells. Inhibits the activity of NK cells thus preventing cell lysis. This Mus musculus (Mouse) protein is Killer cell immunoglobulin-like receptor 3DL1 (Kir3dl1).